Consider the following 356-residue polypeptide: S-adenosylmethionine:tRNA ribosyltransferase-isomerase (356 aa).

The protein belongs to the QueA family. Monomer.

It is found in the cytoplasm. It catalyses the reaction 7-aminomethyl-7-carbaguanosine(34) in tRNA + S-adenosyl-L-methionine = epoxyqueuosine(34) in tRNA + adenine + L-methionine + 2 H(+). It functions in the pathway tRNA modification; tRNA-queuosine biosynthesis. Its function is as follows. Transfers and isomerizes the ribose moiety from AdoMet to the 7-aminomethyl group of 7-deazaguanine (preQ1-tRNA) to give epoxyqueuosine (oQ-tRNA). The sequence is that of S-adenosylmethionine:tRNA ribosyltransferase-isomerase from Escherichia coli O81 (strain ED1a).